The chain runs to 188 residues: GMP synthase [glutamine-hydrolyzing] subunit A (188 aa).

One can recognise a Glutamine amidotransferase type-1 domain in the interval 2–188 (KIAVIYFGGQ…FKNFIEACKK (187 aa)). Cys-79 acts as the Nucleophile in catalysis. Residues His-166 and Glu-168 contribute to the active site.

Heterodimer composed of a glutamine amidotransferase subunit (A) and a GMP-binding subunit (B).

The enzyme catalyses XMP + L-glutamine + ATP + H2O = GMP + L-glutamate + AMP + diphosphate + 2 H(+). The protein operates within purine metabolism; GMP biosynthesis; GMP from XMP (L-Gln route): step 1/1. Functionally, catalyzes the synthesis of GMP from XMP. The polypeptide is GMP synthase [glutamine-hydrolyzing] subunit A (Sulfurisphaera tokodaii (strain DSM 16993 / JCM 10545 / NBRC 100140 / 7) (Sulfolobus tokodaii)).